Here is a 303-residue protein sequence, read N- to C-terminus: Ribosomal protein L11 methyltransferase (303 aa).

Thr144, Gly165, Asp187, and Asn235 together coordinate S-adenosyl-L-methionine.

It belongs to the methyltransferase superfamily. PrmA family.

It localises to the cytoplasm. It carries out the reaction L-lysyl-[protein] + 3 S-adenosyl-L-methionine = N(6),N(6),N(6)-trimethyl-L-lysyl-[protein] + 3 S-adenosyl-L-homocysteine + 3 H(+). Methylates ribosomal protein L11. This chain is Ribosomal protein L11 methyltransferase, found in Prochlorococcus marinus (strain MIT 9301).